The primary structure comprises 174 residues: MESIGIFFGSDTGNTENVAKLIHKYIGTNISSIHDIANTNKKDIELFNILIFGVSTWYYGELQCDWDDFLPTLKKINFNNKIIALFGCGDQEDYSEYFCDGIGILYNVIRLSKNVRFIGSWTSKGYSFECSKALDKNKNFLGLVIDEDRQPEQSNQRIIQWTKKIKTELNSLLN.

In terms of domain architecture, Flavodoxin-like spans 4–166 (IGIFFGSDTG…RIIQWTKKIK (163 aa)).

Belongs to the flavodoxin family. FMN serves as cofactor.

Functionally, low-potential electron donor to a number of redox enzymes. This is Flavodoxin (fldA) from Buchnera aphidicola subsp. Baizongia pistaciae (strain Bp).